A 548-amino-acid chain; its full sequence is SH2/SH3 adapter protein dreadlocks (548 aa).

3 disordered regions span residues 12–37 (IPDSSASSQQYPQQQQHPPQLPQHQN), 57–92 (QVPVPVPGSPAHHQRHSSLSQQQQLHHHRTLSTASS), and 113–146 (GSGSANGSGSGNSSSGSAAGNAGTQSMAGNMKHG). The segment covering 20-37 (QQYPQQQQHPPQLPQHQN) has biased composition (low complexity). Residues 113 to 122 (GSGSANGSGS) show a composition bias toward gly residues. Over residues 123–135 (GNSSSGSAAGNAG) the composition is skewed to low complexity. The SH3 1 domain occupies 150–209 (DDVCYVVAKYDYAAQGAQELDLRKNERYLLLDDSKHWWRVQNSRNQSGYVPSNYVKKEKP). Residues 219 to 247 (VKKGSGSKTLPNCSPSRQVESPTMSRRLP) form a disordered region. The span at 227-242 (TLPNCSPSRQVESPTM) shows a compositional bias: polar residues. SH3 domains are found at residues 252–311 (EAIG…EDCD) and 324–386 (NVLD…ELND). The tract at residues 398–442 (SAGNGNGGGSNGGAGGGGGNDSMERRNEGNKPAAQSSGQPIERPN) is disordered. Residues 401 to 417 (NGNGGGSNGGAGGGGGN) show a composition bias toward gly residues. The SH2 domain occupies 448 to 542 (WYYGAITRSQ…GEKLYLVRSL (95 aa)).

As to quaternary structure, interacts (via SH2 and SH3 domains) with Dscam1 (via cytoplasmic domain); the interaction is direct and requires Dscam1 to be phosphorylated. Interacts (via SH2 and SH3 domains) with InR/Insulin-like receptor (via C-terminal cytoplasmic region); the interaction requires InR kinase activity, probably for autophosphorylation stimulated by insulin signaling. Interacts with Ptp61F (via C-terminus); this interaction is independent of insulin stimulation. Interacts (via SH3 domain 2) with Pak (via N-terminal PXXP motif). Post-translationally, phosphorylated by Src42A and possibly by other tyrosine kinases. Constitutively dephosphorylated by its binding partner Ptp61F.

It is found in the perikaryon. The protein localises to the cell projection. It localises to the axon. The protein resides in the growth cone. Its function is as follows. Adapter protein that links cell surface receptor tyrosine phosphorylation to downstream signaling pathways and effectors, many of which are involved in regulation of the actin cytoskeleton. Recruited by Dscam1/Down syndrome cell adhesion molecule homolog and InR/insulin-like receptor. Recruits Pak to membranes, probably when dock/dreadlocks is associated with activated receptors. Required for guidance and targeting of photoreceptor (R cell) axon projections but not for axon outgrowth, differentiation or target induction in the developing eye. As part of a signaling pathway that involves the lbm/late bloomer protein, involved in synapse formation of the RP3 motorneuron at the muscle 7/6 cleft, probably by stimulating axon defasciculation from other SNb neurons. The sequence is that of SH2/SH3 adapter protein dreadlocks from Drosophila melanogaster (Fruit fly).